The sequence spans 245 residues: 8-amino-3,8-dideoxy-manno-octulosonate cytidylyltransferase (245 aa).

It belongs to the KdsB family.

The protein localises to the cytoplasm. It carries out the reaction 8-amino-3,8-dideoxy-alpha-D-manno-octulosonate + CTP = CMP-8-amino-3,8-dideoxy-alpha-D-manno-oct-2-ulosonate + diphosphate. The protein operates within bacterial outer membrane biogenesis; lipopolysaccharide biosynthesis. In terms of biological role, activates KDO8N (a required 8-carbon sugar) for incorporation into bacterial lipopolysaccharide in the Shewanella genus. In Shewanella sp. (strain W3-18-1), this protein is 8-amino-3,8-dideoxy-manno-octulosonate cytidylyltransferase.